Here is a 414-residue protein sequence, read N- to C-terminus: 2,3-diketo-5-methylthiopentyl-1-phosphate enolase (414 aa).

The active-site Proton acceptor is Lys-99. Substrate contacts are provided by residues Lys-148, 174–177 (KDDE), His-265, Gly-338, and 360–361 (GG). Positions 174, 176, and 177 each coordinate Mg(2+). Position 174 is an N6-carboxylysine (Lys-174).

This sequence belongs to the RuBisCO large chain family. Type IV subfamily. Homodimer. It depends on Mg(2+) as a cofactor.

It catalyses the reaction 5-methylsulfanyl-2,3-dioxopentyl phosphate = 2-hydroxy-5-methylsulfanyl-3-oxopent-1-enyl phosphate. It functions in the pathway amino-acid biosynthesis; L-methionine biosynthesis via salvage pathway; L-methionine from S-methyl-5-thio-alpha-D-ribose 1-phosphate: step 3/6. Functionally, catalyzes the enolization of 2,3-diketo-5-methylthiopentyl-1-phosphate (DK-MTP-1-P) into 2-hydroxy-3-keto-5-methylthiopentenyl-1-phosphate (HK-MTPenyl-1-P). This is 2,3-diketo-5-methylthiopentyl-1-phosphate enolase from Bacillus cereus (strain ATCC 10987 / NRS 248).